Reading from the N-terminus, the 662-residue chain is FAST kinase domain-containing protein 3, mitochondrial (662 aa).

The region spanning 591–649 is the RAP domain; that stretch reads IALCIDGPKRFCSNSKHLLGKEAIKQRHLQLLGYQVVQIPYHEIGMLKSRRELVEYLQR.

This sequence belongs to the FAST kinase family. In terms of tissue distribution, expression detected in spleen, thymus, testis, ovary, colon, heart, smooth muscle, kidney, brain, lung, liver and white adipose tissue with highest expression in liver and thyroid.

The protein localises to the mitochondrion. In terms of biological role, required for normal mitochondrial respiration. Increases steady-state levels and half-lives of a subset of mature mitochondrial mRNAs MT-ND2, MT-ND3, MT-CYTB, MT-CO2, and MT-ATP8/6. Promotes MT-CO1 mRNA translation and increases mitochondrial complex IV assembly and activity. This is FAST kinase domain-containing protein 3, mitochondrial (FASTKD3) from Homo sapiens (Human).